The following is a 406-amino-acid chain: D-alanyl-D-alanine carboxypeptidase (406 aa).

The first 31 residues, methionine 1–alanine 31, serve as a signal peptide directing secretion. The active-site Acyl-ester intermediate is the serine 93. Residues phenylalanine 151–threonine 154, tyrosine 190–asparagine 192, arginine 316, threonine 330–threonine 332, and serine 357–asparagine 358 contribute to the substrate site. A propeptide spanning residues alanine 381–aspartate 406 is cleaved from the precursor. Residues threonine 387 to aspartate 406 are disordered. Positions valine 393–aspartate 406 are enriched in basic and acidic residues.

The protein belongs to the peptidase S12 family.

It is found in the secreted. It catalyses the reaction Preferential cleavage: (Ac)2-L-Lys-D-Ala-|-D-Ala. Also transpeptidation of peptidyl-alanyl moieties that are N-acyl substituents of D-alanine.. The protein operates within cell wall biogenesis; peptidoglycan biosynthesis. In terms of biological role, catalyzes distinct carboxypeptidation and transpeptidation reactions during the last stages of wall peptidoglycan synthesis. Mistaking a beta-lactam antibiotic molecule for a normal substrate (i.e. a D-alanyl-D-alanine-terminated peptide), it becomes immobilized in the form of a long-lived, serine-ester-linked acyl enzyme and thus behave as penicillin-binding protein (PBP). This Streptomyces sp. (strain R61) protein is D-alanyl-D-alanine carboxypeptidase.